The chain runs to 307 residues: Protein EI24 homolog (307 aa).

A run of 2 helical transmembrane segments spans residues 53-73 (FIHC…IYLY) and 92-112 (MFTI…SIIA). Asn135 is a glycosylation site (N-linked (GlcNAc...) asparagine). 4 consecutive transmembrane segments (helical) span residues 153 to 173 (LFGV…TNFI), 175 to 195 (FVII…ILRG), 225 to 245 (FFFP…LFII), and 260 to 280 (GILP…NVIL).

It belongs to the EI24 family.

It is found in the membrane. The sequence is that of Protein EI24 homolog from Dictyostelium discoideum (Social amoeba).